We begin with the raw amino-acid sequence, 432 residues long: MAAPMEVAVCTDSAAQLWSCVVWELHSGANLLTYRGGQAGPRGLALLNGEYLLAAQLGKNYICAWELQRKDQLQQKIMCPGPVTCLTTSPNGLYVLAGISENIYLWEVSTGNLLVILSRHYQDVSCLQFTGDSSHFISGGKDCLVLAWSLCSVLQADPSRTPAPRHVWSRHTLPITDLHCGFGGPLARVATASLDQTVKLWEVSSGELLLSVLFDVGILAVTMDLAEHYMFCGGSDGSIFQVDLCTWPGQREKSFQPEQEHGKVFRGHRNQVTCLSVSTDGSVLLSGSHDETVRLWDVQSQQCLRTVTLKGPVTNACIMLAPVSMLSSDFRPGLPLPHFNKHLLGAEHGDEPHRGGLMLRLGLHQQGSEPSYLERVEQLQAVMSSTLEKNVLGGQDQLRIRVTELEDEVRNLRKINRDLFDFSTRIITHPTK.

WD repeat units lie at residues 36 to 75, 78 to 116, 119 to 158, 170 to 211, 213 to 257, and 267 to 306; these read GGQA…QLQQ, MCPG…LLVI, RHYQ…QADP, RHTL…LLLS, LFDV…SFQP, and GHRN…CLRT.

Belongs to the WD repeat IPI3/WDR18 family. Component of the 5FMC complex, at least composed of PELP1, LAS1L, TEX10, WDR18 and SENP3; the complex interacts with methylated CHTOP and ZNF148. Interacts with NOL9. Component of the PELP1 complex, composed of at least PELP1, TEX10 and WDR18. The complex interacts with pre-60S ribosome particles.

It is found in the nucleus. It localises to the nucleolus. The protein resides in the nucleoplasm. The protein localises to the cytoplasm. Its subcellular location is the dynein axonemal particle. Functions as a component of the Five Friends of Methylated CHTOP (5FMC) complex; the 5FMC complex is recruited to ZNF148 by methylated CHTOP, leading to desumoylation of ZNF148 and subsequent transactivation of ZNF148 target genes. Component of the PELP1 complex involved in the nucleolar steps of 28S rRNA maturation and the subsequent nucleoplasmic transit of the pre-60S ribosomal subunit. May play a role during development. The chain is WD repeat-containing protein 18 (WDR18) from Bos taurus (Bovine).